Here is a 97-residue protein sequence, read N- to C-terminus: Glutamyl-tRNA(Gln) amidotransferase subunit C (97 aa).

It belongs to the GatC family. Heterotrimer of A, B and C subunits.

The enzyme catalyses L-glutamyl-tRNA(Gln) + L-glutamine + ATP + H2O = L-glutaminyl-tRNA(Gln) + L-glutamate + ADP + phosphate + H(+). The catalysed reaction is L-aspartyl-tRNA(Asn) + L-glutamine + ATP + H2O = L-asparaginyl-tRNA(Asn) + L-glutamate + ADP + phosphate + 2 H(+). Functionally, allows the formation of correctly charged Asn-tRNA(Asn) or Gln-tRNA(Gln) through the transamidation of misacylated Asp-tRNA(Asn) or Glu-tRNA(Gln) in organisms which lack either or both of asparaginyl-tRNA or glutaminyl-tRNA synthetases. The reaction takes place in the presence of glutamine and ATP through an activated phospho-Asp-tRNA(Asn) or phospho-Glu-tRNA(Gln). The polypeptide is Glutamyl-tRNA(Gln) amidotransferase subunit C (Saccharolobus solfataricus (strain ATCC 35092 / DSM 1617 / JCM 11322 / P2) (Sulfolobus solfataricus)).